Reading from the N-terminus, the 230-residue chain is Ribose-5-phosphate isomerase A (230 aa).

Substrate contacts are provided by residues 29–32, 86–89, and 99–102; these read SGST, DGAD, and KGGG. Residue Glu108 is the Proton acceptor of the active site. Lys126 contacts substrate.

It belongs to the ribose 5-phosphate isomerase family. As to quaternary structure, homodimer.

The enzyme catalyses aldehydo-D-ribose 5-phosphate = D-ribulose 5-phosphate. Its pathway is carbohydrate degradation; pentose phosphate pathway; D-ribose 5-phosphate from D-ribulose 5-phosphate (non-oxidative stage): step 1/1. Functionally, catalyzes the reversible conversion of ribose-5-phosphate to ribulose 5-phosphate. The protein is Ribose-5-phosphate isomerase A of Desulfatibacillum aliphaticivorans.